A 554-amino-acid chain; its full sequence is Glucose-binding protein GlcS (554 aa).

Residues 1 to 17 (MKRKYPYSLAKGLTSTQ) are Cytoplasmic-facing. The helical transmembrane segment at 18-38 (IAVIVAVIVIVIIIGVVAGFV) threads the bilayer. At 39-525 (LTKGPSTTAV…YGLTNNTQKT (487 aa)) the chain is on the extracellular side. A helical transmembrane segment spans residues 526–546 (SNSVMLFLLPFLALPLAIASI). The Cytoplasmic segment spans residues 547–554 (DNKYYLLK).

It belongs to the bacterial solute-binding protein 1 family. As to quaternary structure, the complex is composed of two ATP-binding proteins (GlcV), two transmembrane proteins (GlcT and GlcU) and a solute-binding protein (GlcS).

The protein resides in the cell membrane. With respect to regulation, binding of glucose is strongly inhibited by galactose and mannose. Part of the ABC transporter complex GlcSTUV involved in glucose uptake. Binds glucose. Can also bind galactose and mannose. The protein is Glucose-binding protein GlcS of Saccharolobus solfataricus (strain ATCC 35092 / DSM 1617 / JCM 11322 / P2) (Sulfolobus solfataricus).